The chain runs to 301 residues: Protoheme IX farnesyltransferase (301 aa).

8 helical membrane-spanning segments follow: residues 25–45 (VTQL…PGMV), 47–67 (WTPL…AFAI), 97–117 (ILLF…TFAN), 119–139 (LTMW…TLLL), 147–167 (IVIG…AVTG), 173–193 (AWIL…ALAL), 235–255 (FISG…GALF), and 279–299 (IVYL…RVLI).

This sequence belongs to the UbiA prenyltransferase family. Protoheme IX farnesyltransferase subfamily.

It localises to the cell inner membrane. The catalysed reaction is heme b + (2E,6E)-farnesyl diphosphate + H2O = Fe(II)-heme o + diphosphate. It participates in porphyrin-containing compound metabolism; heme O biosynthesis; heme O from protoheme: step 1/1. In terms of biological role, converts heme B (protoheme IX) to heme O by substitution of the vinyl group on carbon 2 of heme B porphyrin ring with a hydroxyethyl farnesyl side group. This chain is Protoheme IX farnesyltransferase, found in Paraburkholderia xenovorans (strain LB400).